Reading from the N-terminus, the 105-residue chain is Large ribosomal subunit protein uL24 (105 aa).

The protein belongs to the universal ribosomal protein uL24 family. Part of the 50S ribosomal subunit.

In terms of biological role, one of two assembly initiator proteins, it binds directly to the 5'-end of the 23S rRNA, where it nucleates assembly of the 50S subunit. Its function is as follows. One of the proteins that surrounds the polypeptide exit tunnel on the outside of the subunit. This chain is Large ribosomal subunit protein uL24, found in Clostridium novyi (strain NT).